A 339-amino-acid polypeptide reads, in one-letter code: MSYSAPSQITQRQLAYFEGKHVLIAGELNDNFPLELDKHCASTSIFTTNYGYYKQFSENPKINCYFGTELIEESHADMILLYWPKAKAEAEYLLTMLLAKLGKDTEIIVVGENRSGVKSVEKMFANFGPMNKLDSARRCSFYWGQCTETAPSFNLQDWFKEYQVQFKEHTIEVRSLPGVFSHGEFDKGSELLLQTLPSLRGHVLDFGCGAGVLGSVMKTINPKIHLDMVDISAFAIASSIETLKANGLEGNVFASDVYSDTKQNYQFIVSNPPFHAGLKTHYSSTEELLQKAPQNLTHSGQMIFVANSFLQYPPIVEKVFGHCNTLAKNNKFRIYSAQK.

The protein belongs to the methyltransferase superfamily. RsmC family. Monomer.

It is found in the cytoplasm. The catalysed reaction is guanosine(1207) in 16S rRNA + S-adenosyl-L-methionine = N(2)-methylguanosine(1207) in 16S rRNA + S-adenosyl-L-homocysteine + H(+). In terms of biological role, specifically methylates the guanine in position 1207 of 16S rRNA in the 30S particle. This is Ribosomal RNA small subunit methyltransferase C from Aliivibrio salmonicida (strain LFI1238) (Vibrio salmonicida (strain LFI1238)).